The sequence spans 508 residues: RanBP-type and C3HC4-type zinc finger-containing protein 1 (508 aa).

Met1 carries the N-acetylmethionine modification. The segment at 1-218 (MDEKTKKAEE…PGCEMCCRAR (218 aa)) is interaction with IRF3. The interval 1 to 268 (MDEKTKKAEE…NYLQHVQLEQ (268 aa)) is interaction with TAB2. At Ser50 the chain carries Phosphoserine. Residues 55–119 (IRLCVSVEDA…DQETLHSHGI (65 aa)) enclose the Ubiquitin-like domain. Residues 69–131 (VTIWLTVRPD…NGDSAYLYLL (63 aa)) are interaction with RNF31. Residues 161 to 191 (TLQPRGPLEPVLPKPRTHQETGQPDAAPESP) are disordered. The RanBP2-type zinc finger occupies 188–220 (PESPPVGWQCPGCTFINKPTRPGCEMCCRARPE). Positions 231 to 260 (DEEERARLAGEEEALRQYEQRKQQQQEGNY) form a coiled coil. A TRIAD supradomain region spans residues 276–504 (EPAECPVCYS…VNGIPCHPSC (229 aa)). Residues Cys280, Cys283, Cys298, His300, Cys303, Cys306, and Cys321 each coordinate Zn(2+). The segment at 280–330 (CPVCYSVLAPGEAVVLRECLHTFCRECLQGTIRNSQEAEVSCPFIDNTYSC) adopts an RING-type 1 zinc-finger fold. Residue Tyr328 is modified to Phosphotyrosine. Positions 330, 369, 374, 389, 392, 397, 400, 404, 409, 445, and 448 each coordinate Zn(2+). Residues 349 to 409 (QRFLDLGVSI…CKAIHERMNC (61 aa)) form an IBR-type zinc finger. Residues 445–474 (CPQCRIVVQKKDGCDWIRCTVCHTEICWVT) form an RING-type 2; atypical zinc finger. Cys458 is a catalytic residue. Zn(2+)-binding residues include Cys463 and Cys466.

This sequence belongs to the RBR family. As to quaternary structure, component of the LUBAC complex (linear ubiquitin chain assembly complex) which consists of SHARPIN, RBCK1 and RNF31. LUBAC has a MW of approximately 600 kDa suggesting a heteromultimeric assembly of its subunits. Interacts with beta-I-type (PRKCB1) and zeta-type protein kinase C (PRKCZ). Interacts with UBE2L3. Interacts with IREB2 only in iron-rich conditions. Associates with the TNF-R1 signaling complex (TNF-RSC) in a stimulation-dependent manner. Interacts with EYA1, TAB2, TAB3, MAP3K7 TRAF6 and RIPK1. Interacts with IRF3. Auto-ubiquitinated. Auto-ubiquitination leads to degradation by the proteasome. Post-translationally, phosphorylated. In vitro, phosphorylation inhibits auto-ubiquitination activity. Widely expressed.

It carries out the reaction [E2 ubiquitin-conjugating enzyme]-S-ubiquitinyl-L-cysteine + [acceptor protein]-L-lysine = [E2 ubiquitin-conjugating enzyme]-L-cysteine + [acceptor protein]-N(6)-ubiquitinyl-L-lysine.. Its pathway is protein modification; protein ubiquitination. E3 ubiquitin-protein ligase, which accepts ubiquitin from specific E2 ubiquitin-conjugating enzymes, such as UBE2L3/UBCM4, and then transfers it to substrates. Functions as an E3 ligase for oxidized IREB2 and both heme and oxygen are necessary for IREB2 ubiquitination. Promotes ubiquitination of TAB2 and IRF3 and their degradation by the proteasome. Component of the LUBAC complex which conjugates linear ('Met-1'-linked) polyubiquitin chains to substrates and plays a key role in NF-kappa-B activation and regulation of inflammation. LUBAC conjugates linear polyubiquitin to IKBKG and RIPK1 and is involved in activation of the canonical NF-kappa-B and the JNK signaling pathways. Linear ubiquitination mediated by the LUBAC complex interferes with TNF-induced cell death and thereby prevents inflammation. LUBAC is recruited to the TNF-R1 signaling complex (TNF-RSC) following polyubiquitination of TNF-RSC components by BIRC2 and/or BIRC3 and to conjugate linear polyubiquitin to IKBKG and possibly other components contributing to the stability of the complex. The LUBAC complex is also involved in innate immunity by conjugating linear polyubiquitin chains at the surface of bacteria invading the cytosol to form the ubiquitin coat surrounding bacteria. LUBAC is not able to initiate formation of the bacterial ubiquitin coat, and can only promote formation of linear polyubiquitins on pre-existing ubiquitin. The bacterial ubiquitin coat acts as an 'eat-me' signal for xenophagy and promotes NF-kappa-B activation. Together with OTULIN, the LUBAC complex regulates the canonical Wnt signaling during angiogenesis. Binds polyubiquitin of different linkage types. The protein is RanBP-type and C3HC4-type zinc finger-containing protein 1 (Rbck1) of Rattus norvegicus (Rat).